The following is a 397-amino-acid chain: Pentatricopeptide repeat-containing protein At1g80150, mitochondrial (397 aa).

A mitochondrion-targeting transit peptide spans 1 to 81 (MLSLRHIRRF…FAFEDTVSRL (81 aa)). PPR repeat units follow at residues 105–139 (REGFIVRIIMLYGKAGMTKQALDTFFNMDLYGCKR), 140–170 (SVKSFNAALQVLSFNPDLHTIWEFLHDAPSK), 176–210 (DAVSFNIAIKSFCELGILDGAYMAMREMEKSGLTP), 211–245 (DVVTYTTLISALYKHERCVIGNGLWNLMVLKGCKP), 246–280 (NLTTFNVRIQFLVNRRRAWDANDLLLLMPKLQVEP), 281–315 (DSITYNMVIKGFFLARFPDMAERVYTAMHGKGYKP), 316–350 (NLKIYQTMIHYLCKAGNFDLAYTMCKDCMRKKWYP), and 351–381 (NLDTVEMLLKGLVKKGQLDQAKSIMELVHRR).

The protein belongs to the PPR family. P subfamily.

Its subcellular location is the mitochondrion. This chain is Pentatricopeptide repeat-containing protein At1g80150, mitochondrial, found in Arabidopsis thaliana (Mouse-ear cress).